The following is a 53-amino-acid chain: UPF0391 membrane protein PSEEN0090 (53 aa).

Transmembrane regions (helical) follow at residues Trp-4–Ala-24 and Gly-29–Gly-49.

Belongs to the UPF0391 family.

The protein resides in the cell membrane. The sequence is that of UPF0391 membrane protein PSEEN0090 from Pseudomonas entomophila (strain L48).